Consider the following 201-residue polypeptide: Probable calcium-binding protein CML15 (201 aa).

The disordered stretch occupies residues 1-55 (MGKVRAFFSRKGRGNSSGRSRSMREAAMNVDWSPRPSDLAAAAAAKPRPPAAEDE). EF-hand domains lie at 51–86 (AAED…VGHA), 87–122 (VTDD…PPGD), 125–160 (AAEE…IGEA), and 161–196 (ATVA…GAGF). Positions 64, 66, 68, 70, 75, 100, 102, 104, 106, 111, 138, 140, 142, 149, 174, 176, 178, and 185 each coordinate Ca(2+).

Functionally, potential calcium sensor. This chain is Probable calcium-binding protein CML15 (CML15), found in Oryza sativa subsp. japonica (Rice).